The following is a 1373-amino-acid chain: Actin cytoskeleton-regulatory complex protein PAN1 (1373 aa).

The EH 1 domain occupies 116–205; that stretch reads DQKKFEHLFR…EKWANEVKSF (90 aa). The EF-hand 1 domain maps to 149-184; it reads LTPVTLAEIWSLSDTNKSGSLLFPEFALSLHLCSMA. Disordered regions lie at residues 271–362 and 385–409; these read GGGL…QQQS and AQRT…QPTG. Composition is skewed to low complexity over residues 290–309 and 341–362; these read TTSF…PLAS and PQQL…QQQS. The span at 389 to 408 shows a compositional bias: polar residues; that stretch reads GPLQSQSTGFQPAPLQSQPT. Positions 465–554 constitute an EH 2 domain; it reads EKSIYDGIFQ…PELIPPSNKY (90 aa). The region spanning 498 to 533 is the EF-hand 2 domain; it reads LSRPDLESIWTLADTSDRGKLNKDEFSVAMHLVYRR. Disordered regions lie at residues 562–622, 739–758, 876–914, 931–1089, 1103–1335, and 1349–1373; these read MKNS…SSSD, SWNP…NGEV, QNSS…RTPE, RLAK…TAED, EAVP…APPV, and GKSL…TVLS. Over residues 571-580 the composition is skewed to polar residues; that stretch reads NNKSYSGGKQ. The span at 581-590 shows a compositional bias: basic and acidic residues; sequence TKSDGTRFKN. Polar residues predominate over residues 739–752; the sequence is SWNPDSNESEIQGT. 2 stretches are compositionally biased toward low complexity: residues 878 to 909 and 965 to 977; these read SSSL…ASSS and PAVV…SPPV. Residues 1007–1066 adopt a coiled-coil conformation; the sequence is DDEEYAAILKQKQQLEAKEKERKLAKQKQKQARLDKIKKEMEEIKRRQAEAEAEEDSDEE. Basic and acidic residues-rich tracts occupy residues 1019–1030 and 1038–1056; these read QQLEAKEKERKL and ARLD…RQAE. The span at 1057–1067 shows a compositional bias: acidic residues; it reads AEAEEDSDEEP. Polar residues-rich tracts occupy residues 1070 to 1079 and 1118 to 1134; these read VPTYTVSNSA and NPFS…STNP. The span at 1139–1149 shows a compositional bias: basic and acidic residues; sequence TTKESTIDPKK. Over residues 1154–1166 the composition is skewed to polar residues; the sequence is RASQRGLSKNDGW. Residues 1167 to 1177 show a composition bias toward acidic residues; sequence SDSDDNESEDD. Pro residues predominate over residues 1250 to 1326; sequence PPIPTEVPPI…PPPPGPPPPV (77 aa). The 18-residue stretch at 1338–1355 folds into the WH2 domain; it reads DIGALLGQIQGGKSLKKV. The segment covering 1357–1373 has biased composition (polar residues); sequence ASQQKISSNDLAGTVLS.

Belongs to the PAN1 family. Component of the PAN1 actin cytoskeleton-regulatory complex.

It localises to the cell membrane. It is found in the endosome membrane. Its subcellular location is the cytoplasm. The protein localises to the cytoskeleton. The protein resides in the actin patch. Its function is as follows. Component of the PAN1 actin cytoskeleton-regulatory complex required for the internalization of endosomes during actin-coupled endocytosis. The complex links the site of endocytosis to the cell membrane-associated actin cytoskeleton. Mediates uptake of external molecules and vacuolar degradation of plasma membrane proteins. Plays a role in the proper organization of the cell membrane-associated actin cytoskeleton and promotes its destabilization. This chain is Actin cytoskeleton-regulatory complex protein PAN1 (PAN1), found in Scheffersomyces stipitis (strain ATCC 58785 / CBS 6054 / NBRC 10063 / NRRL Y-11545) (Yeast).